The chain runs to 337 residues: tRNA N6-adenosine threonylcarbamoyltransferase (337 aa).

Fe cation contacts are provided by H111 and H115. Residues 134–138 (LVSGG), D167, G180, and N272 contribute to the substrate site. D300 is a Fe cation binding site.

This sequence belongs to the KAE1 / TsaD family. It depends on Fe(2+) as a cofactor.

It is found in the cytoplasm. It carries out the reaction L-threonylcarbamoyladenylate + adenosine(37) in tRNA = N(6)-L-threonylcarbamoyladenosine(37) in tRNA + AMP + H(+). In terms of biological role, required for the formation of a threonylcarbamoyl group on adenosine at position 37 (t(6)A37) in tRNAs that read codons beginning with adenine. Is involved in the transfer of the threonylcarbamoyl moiety of threonylcarbamoyl-AMP (TC-AMP) to the N6 group of A37, together with TsaE and TsaB. TsaD likely plays a direct catalytic role in this reaction. This Salmonella newport (strain SL254) protein is tRNA N6-adenosine threonylcarbamoyltransferase.